Here is a 221-residue protein sequence, read N- to C-terminus: MDESDLYRKWMRLVENLEREGIIKSEKVKRAFLRVPRYKFVSDRYKEYAHVDEPLPIPAGQTISAPHMVAIMLELAELEGGMNVLEVGAGSGWNAALIYELVKREVYTIERVSDLVEFARKNLERAGYKDKVHVIWGDGSKGYPPNAPYDRIIVTAGAPKVPEPLIEQLKVGGKLLIPVGSYHLWQELLEVIKLDEDNNTKIKNHGGVAFVPLIGEHGWRE.

Serine 64 is an active-site residue.

The protein belongs to the methyltransferase superfamily. L-isoaspartyl/D-aspartyl protein methyltransferase family.

It localises to the cytoplasm. It catalyses the reaction [protein]-L-isoaspartate + S-adenosyl-L-methionine = [protein]-L-isoaspartate alpha-methyl ester + S-adenosyl-L-homocysteine. Catalyzes the methyl esterification of L-isoaspartyl residues in peptides and proteins that result from spontaneous decomposition of normal L-aspartyl and L-asparaginyl residues. It plays a role in the repair and/or degradation of damaged proteins. The chain is Protein-L-isoaspartate O-methyltransferase from Thermococcus sibiricus (strain DSM 12597 / MM 739).